We begin with the raw amino-acid sequence, 167 residues long: Lipoprotein signal peptidase (167 aa).

Transmembrane regions (helical) follow at residues 10-30, 68-88, and 98-118; these read LIWL…KAWV, WQMW…TFWL, and SALP…DRFL. Active-site residues include aspartate 124 and aspartate 142. Residues 138–158 form a helical membrane-spanning segment; sequence FNLADSAIVAGAIGIGLLSLF.

The protein belongs to the peptidase A8 family.

It is found in the cell inner membrane. It carries out the reaction Release of signal peptides from bacterial membrane prolipoproteins. Hydrolyzes -Xaa-Yaa-Zaa-|-(S,diacylglyceryl)Cys-, in which Xaa is hydrophobic (preferably Leu), and Yaa (Ala or Ser) and Zaa (Gly or Ala) have small, neutral side chains.. Its pathway is protein modification; lipoprotein biosynthesis (signal peptide cleavage). This protein specifically catalyzes the removal of signal peptides from prolipoproteins. The sequence is that of Lipoprotein signal peptidase from Xylella fastidiosa (strain M23).